Here is a 370-residue protein sequence, read N- to C-terminus: GDSL esterase/lipase At1g33811 (370 aa).

A signal peptide spans 1–24 (MGILRFVLLISLNLVLFGFKTTVS). Residue Ser-41 is the Nucleophile of the active site. 3 N-linked (GlcNAc...) asparagine glycosylation sites follow: Asn-203, Asn-241, and Asn-242. Catalysis depends on residues Asp-336 and His-339.

It belongs to the 'GDSL' lipolytic enzyme family.

Its subcellular location is the secreted. The sequence is that of GDSL esterase/lipase At1g33811 from Arabidopsis thaliana (Mouse-ear cress).